The sequence spans 593 residues: MLO-like protein 8 (593 aa).

The Extracellular portion of the chain corresponds to 1–46; that stretch reads MGIIDGSLLRRLICLCLWCLLGGGVTVVTAEDEKKVVHKQLNQTPT. Residues 47 to 67 traverse the membrane as a helical segment; that stretch reads WAVAAVCTFFIVVSVLLEKLL. At 68–92 the chain is on the cytoplasmic side; that stretch reads HKVGKVLWDRHKTALLDALEKIKAE. The chain crosses the membrane as a helical span at residues 93–113; it reads LMVLGFISLLLTFGQTYILDI. Residues 114–181 lie on the Extracellular side of the membrane; sequence CIPSHVARTM…ISAEALHQLH (68 aa). A helical transmembrane segment spans residues 182–202; it reads ILIFFLAIFHVLYSFLTMMLG. The Cytoplasmic portion of the chain corresponds to 203–304; that stretch reads RLKIRGWKHW…IKRSLEDDFK (102 aa). A helical membrane pass occupies residues 305-325; that stretch reads VVVGVSPVLWGSFVLFLLLNI. Residue D326 is a topological domain, extracellular. The chain crosses the membrane as a helical span at residues 327 to 347; it reads GFKMMFIGTAIPVIIILAVGT. Residues 348–393 are Cytoplasmic-facing; that stretch reads KLQAIMTRMALGITDRHAVVQGMPLVQGNDEYFWFGRPHLILHLMH. A helical membrane pass occupies residues 394–414; sequence FALFQNAFQITYFFWIWYSFG. Residues 415-430 lie on the Extracellular side of the membrane; it reads SDSCYHPNFKIALVKV. The chain crosses the membrane as a helical span at residues 431–451; it reads AIALGVLCLCSYITLPLYALV. At 452-593 the chain is on the cytoplasmic side; that stretch reads TQMGSRMKKS…APSNESSQDR (142 aa). The tract at residues 465–486 is calmodulin-binding; sequence EQTSKALKKWRMAVKKKKGVKA. The disordered stretch occupies residues 481–593; the sequence is KKGVKATTKR…APSNESSQDR (113 aa). Residues 489-512 show a composition bias toward low complexity; it reads KRLGGDGSASPTASTVRSTSSVRS. A compositionally biased stretch (acidic residues) spans 528–539; that stretch reads LDPETSDLDTDN. Positions 567–579 are enriched in basic and acidic residues; it reads TSRDTETDSKEFS.

This sequence belongs to the MLO family.

It is found in the membrane. Its function is as follows. May be involved in modulation of pathogen defense and leaf cell death. Activity seems to be regulated by Ca(2+)-dependent calmodulin binding and seems not to require heterotrimeric G proteins. This is MLO-like protein 8 (MLO8) from Arabidopsis thaliana (Mouse-ear cress).